The sequence spans 374 residues: Queuine tRNA-ribosyltransferase (374 aa).

Asp-91 acts as the Proton acceptor in catalysis. Residues 91–95 (DSGGY), Asp-145, Gln-189, and Gly-216 each bind substrate. Residues 247 to 253 (GVGTVPD) form an RNA binding region. The active-site Nucleophile is Asp-266. An RNA binding; important for wobble base 34 recognition region spans residues 271-275 (TRNAR). The Zn(2+) site is built by Cys-304, Cys-306, Cys-309, and His-335.

It belongs to the queuine tRNA-ribosyltransferase family. Homodimer. Within each dimer, one monomer is responsible for RNA recognition and catalysis, while the other monomer binds to the replacement base PreQ1. Requires Zn(2+) as cofactor.

It carries out the reaction 7-aminomethyl-7-carbaguanine + guanosine(34) in tRNA = 7-aminomethyl-7-carbaguanosine(34) in tRNA + guanine. It functions in the pathway tRNA modification; tRNA-queuosine biosynthesis. Its function is as follows. Catalyzes the base-exchange of a guanine (G) residue with the queuine precursor 7-aminomethyl-7-deazaguanine (PreQ1) at position 34 (anticodon wobble position) in tRNAs with GU(N) anticodons (tRNA-Asp, -Asn, -His and -Tyr). Catalysis occurs through a double-displacement mechanism. The nucleophile active site attacks the C1' of nucleotide 34 to detach the guanine base from the RNA, forming a covalent enzyme-RNA intermediate. The proton acceptor active site deprotonates the incoming PreQ1, allowing a nucleophilic attack on the C1' of the ribose to form the product. After dissociation, two additional enzymatic reactions on the tRNA convert PreQ1 to queuine (Q), resulting in the hypermodified nucleoside queuosine (7-(((4,5-cis-dihydroxy-2-cyclopenten-1-yl)amino)methyl)-7-deazaguanosine). The protein is Queuine tRNA-ribosyltransferase of Leptospira interrogans serogroup Icterohaemorrhagiae serovar Lai (strain 56601).